The primary structure comprises 775 residues: Outer capsid protein VP4 (775 aa).

A spike head region spans residues leucine 65 to leucine 223. Residues alanine 247 to aspartate 478 form a spike body and stalk (antigen domain) region. The DGE motif; interaction with ITGA2/ITGB1 heterodimer signature appears at aspartate 307 to glutamate 309. Cysteine 317 and cysteine 379 form a disulfide bridge. The tract at residues leucine 388 to valine 408 is hydrophobic; possible role in virus entry into host cell. Positions tyrosine 447 to leucine 449 match the YGL motif; interaction with ITGA4 motif. Residues isoleucine 483–glutamate 510 adopt a coiled-coil conformation. The interval glutamine 509–leucine 775 is spike foot. The short motif at lysine 643 to aspartate 645 is the KID motif; interaction with HSPA8 element.

The protein belongs to the rotavirus VP4 family. Homotrimer. VP4 adopts a dimeric appearance above the capsid surface, while forming a trimeric base anchored inside the capsid layer. Only hints of the third molecule are observed above the capsid surface. It probably performs a series of molecular rearrangements during viral entry. Prior to trypsin cleavage, it is flexible. The priming trypsin cleavage triggers its rearrangement into rigid spikes with approximate two-fold symmetry of their protruding parts. After an unknown second triggering event, cleaved VP4 may undergo another rearrangement, in which two VP5* subunits fold back on themselves and join a third subunit to form a tightly associated trimer, shaped like a folded umbrella. Interacts with VP6. Interacts with VP7. In terms of assembly, homotrimer. The trimer is coiled-coil stabilized by its C-terminus, however, its N-terminus, known as antigen domain or 'body', seems to be flexible allowing it to self-associate either as a dimer or a trimer. Proteolytic cleavage by trypsin results in activation of VP4 functions and greatly increases infectivity. The penetration into the host cell is dependent on trypsin treatment of VP4. It produces two peptides, VP5* and VP8* that remain associated with the virion. Cleavage of VP4 by trypsin probably occurs in vivo in the lumen of the intestine prior to infection of enterocytes. Trypsin seems to be incorporated into the three-layered viral particles but remains inactive as long as the viral outer capsid is intact and would only be activated upon the solubilization of the latter.

It is found in the virion. The protein resides in the host rough endoplasmic reticulum. It localises to the host cell membrane. Its subcellular location is the host cytoplasm. The protein localises to the host cytoskeleton. It is found in the host endoplasmic reticulum-Golgi intermediate compartment. Spike-forming protein that mediates virion attachment to the host epithelial cell receptors and plays a major role in cell penetration, determination of host range restriction and virulence. Rotavirus attachment and entry into the host cell probably involves multiple sequential contacts between the outer capsid proteins VP4 and VP7, and the cell receptors. It is subsequently lost, together with VP7, following virus entry into the host cell. Following entry into the host cell, low intracellular or intravesicular Ca(2+) concentration probably causes the calcium-stabilized VP7 trimers to dissociate from the virion. This step is probably necessary for the membrane-disrupting entry step and the release of VP4, which is locked onto the virion by VP7. During the virus exit from the host cell, VP4 seems to be required to target the newly formed virions to the host cell lipid rafts. In terms of biological role, forms the spike 'foot' and 'body' and acts as a membrane permeabilization protein that mediates release of viral particles from endosomal compartments into the cytoplasm. During entry, the part of VP5* that protrudes from the virus folds back on itself and reorganizes from a local dimer to a trimer. This reorganization may be linked to membrane penetration by exposing VP5* hydrophobic region. In integrin-dependent strains, VP5* targets the integrin heterodimer ITGA2/ITGB1 for cell attachment. Functionally, forms the head of the spikes and mediates the recognition of specific host cell surface glycans. It is the viral hemagglutinin and an important target of neutralizing antibodies. In sialic acid-dependent strains, VP8* binds to host cell sialic acid, most probably a ganglioside, providing the initial contact. In some other strains, VP8* mediates the attachment to histo-blood group antigens (HBGAs) for viral entry. This Homo sapiens (Human) protein is Outer capsid protein VP4.